The chain runs to 201 residues: Imidazole glycerol phosphate synthase subunit HisH (201 aa).

Residues Met1–Asp201 enclose the Glutamine amidotransferase type-1 domain. Cys79 acts as the Nucleophile in catalysis. Active-site residues include His181 and Glu183.

Heterodimer of HisH and HisF.

It is found in the cytoplasm. It carries out the reaction 5-[(5-phospho-1-deoxy-D-ribulos-1-ylimino)methylamino]-1-(5-phospho-beta-D-ribosyl)imidazole-4-carboxamide + L-glutamine = D-erythro-1-(imidazol-4-yl)glycerol 3-phosphate + 5-amino-1-(5-phospho-beta-D-ribosyl)imidazole-4-carboxamide + L-glutamate + H(+). The enzyme catalyses L-glutamine + H2O = L-glutamate + NH4(+). It participates in amino-acid biosynthesis; L-histidine biosynthesis; L-histidine from 5-phospho-alpha-D-ribose 1-diphosphate: step 5/9. Functionally, IGPS catalyzes the conversion of PRFAR and glutamine to IGP, AICAR and glutamate. The HisH subunit catalyzes the hydrolysis of glutamine to glutamate and ammonia as part of the synthesis of IGP and AICAR. The resulting ammonia molecule is channeled to the active site of HisF. This Streptococcus mutans serotype c (strain ATCC 700610 / UA159) protein is Imidazole glycerol phosphate synthase subunit HisH.